Reading from the N-terminus, the 155-residue chain is Protein E6 (155 aa).

Zinc fingers lie at residues cysteine 33–cysteine 69 and cysteine 106–cysteine 142.

The protein belongs to the papillomaviridae E6 protein family. In terms of assembly, forms homodimers. Interacts with ubiquitin-protein ligase UBE3A/E6-AP; this interaction stimulates UBE3A ubiquitin activity. Interacts with host TP53 and EP300; this interaction inhibits TP53 activity.

It localises to the host cytoplasm. Its subcellular location is the host nucleus. In terms of biological role, plays a major role in the induction and maintenance of cellular transformation. E6 associates with host UBE3A/E6-AP ubiquitin-protein ligase and modulates its activity. Sequesters tumor suppressor TP53 in the host cytoplasm and modulates its activity by interacting with host EP300 that results in the reduction of TP53 acetylation and activation. In turn, apoptosis induced by DNA damage is inhibited. E6 also protects host keratinocytes from apoptosis by mediating the degradation of host BAK1. May also inhibit host immune response. The chain is Protein E6 from Homo sapiens (Human).